A 355-amino-acid chain; its full sequence is Probable dual-specificity RNA methyltransferase RlmN (355 aa).

Glu-89 serves as the catalytic Proton acceptor. The region spanning 95-322 is the Radical SAM core domain; it reads YENRKTVCLS…KRLGVPTSIR (228 aa). A disulfide bridge connects residues Cys-102 and Cys-333. Residues Cys-109, Cys-113, and Cys-116 each contribute to the [4Fe-4S] cluster site. S-adenosyl-L-methionine-binding positions include 159-160, Ser-191, 214-216, and Asn-290; these read GE and SLH. Cys-333 functions as the S-methylcysteine intermediate in the catalytic mechanism.

This sequence belongs to the radical SAM superfamily. RlmN family. [4Fe-4S] cluster is required as a cofactor.

The protein localises to the cytoplasm. The enzyme catalyses adenosine(2503) in 23S rRNA + 2 reduced [2Fe-2S]-[ferredoxin] + 2 S-adenosyl-L-methionine = 2-methyladenosine(2503) in 23S rRNA + 5'-deoxyadenosine + L-methionine + 2 oxidized [2Fe-2S]-[ferredoxin] + S-adenosyl-L-homocysteine. The catalysed reaction is adenosine(37) in tRNA + 2 reduced [2Fe-2S]-[ferredoxin] + 2 S-adenosyl-L-methionine = 2-methyladenosine(37) in tRNA + 5'-deoxyadenosine + L-methionine + 2 oxidized [2Fe-2S]-[ferredoxin] + S-adenosyl-L-homocysteine. Functionally, specifically methylates position 2 of adenine 2503 in 23S rRNA and position 2 of adenine 37 in tRNAs. The protein is Probable dual-specificity RNA methyltransferase RlmN of Thermus thermophilus (strain ATCC BAA-163 / DSM 7039 / HB27).